Here is a 213-residue protein sequence, read N- to C-terminus: MQLKNPILGLCQQATFMLSAAKVDQCPDDEGFEVAFAGRSNAGKSSALNTLTHASLARTSKTPGRTQLLNFFKLDDDRRLVDLPGYGYAKVPIPLKQHWQRHLEAYLGSRESLKGLILMMDIRHPMTDFDLLMLDWAVASGMPMHILLTKADKLTYGAAKNTLLKVQSQIRKGWGEAVTIQLFSAPKRMGLEEAYTVLAGWMELADKGAEAEA.

Positions 30–204 (EGFEVAFAGR…YTVLAGWMEL (175 aa)) constitute an EngB-type G domain. GTP is bound by residues 38 to 45 (GRSNAGKS), 64 to 68 (GRTQL), 82 to 85 (DLPG), 149 to 152 (TKAD), and 182 to 185 (LFSA). 2 residues coordinate Mg(2+): serine 45 and threonine 66.

Belongs to the TRAFAC class TrmE-Era-EngA-EngB-Septin-like GTPase superfamily. EngB GTPase family. Requires Mg(2+) as cofactor.

Its function is as follows. Necessary for normal cell division and for the maintenance of normal septation. This is Probable GTP-binding protein EngB from Pseudomonas fluorescens (strain ATCC BAA-477 / NRRL B-23932 / Pf-5).